Here is a 299-residue protein sequence, read N- to C-terminus: Protease HtpX homolog (299 aa).

Transmembrane regions (helical) follow at residues 15 to 35 (ILLL…GYLF) and 39 to 59 (GLGG…SMIF). Histidine 143 contacts Zn(2+). Glutamate 144 is a catalytic residue. Zn(2+) is bound at residue histidine 147. A run of 2 helical transmembrane segments spans residues 158–178 (IAVA…RMMW) and 198–218 (IIML…ATLV). Glutamate 227 contributes to the Zn(2+) binding site.

The protein belongs to the peptidase M48B family. Zn(2+) is required as a cofactor.

The protein localises to the cell membrane. The chain is Protease HtpX homolog from Streptococcus pneumoniae (strain Taiwan19F-14).